The chain runs to 149 residues: Large ribosomal subunit protein bL9 (149 aa).

This sequence belongs to the bacterial ribosomal protein bL9 family.

In terms of biological role, binds to the 23S rRNA. The polypeptide is Large ribosomal subunit protein bL9 (Glaesserella parasuis serovar 5 (strain SH0165) (Haemophilus parasuis)).